The primary structure comprises 796 residues: Armadillo repeat-containing protein wrm-1 (796 aa).

The segment at 17–59 (NFNPMTPSTSRVSTPVRPSSTMSARQYSGSPFKAQPQNMEPSN) is disordered. An ARM repeat occupies 462 to 504 (ESIHCIVQLIGCSDVTIVELATGTLRNIGLHNKMNKAFMVQDG).

As to quaternary structure, interacts (independently of ARM repeat) with nhr-25. Component of the beta-catenin-lit-1 complex (also called the lit-1/wrm-1 complex or the wrm-1/lit-1 kinase complex) at least composed of lit-1 and wrm-1. Interacts (via N-terminus) with lit-1; the interaction is direct and activates lit-1 kinase activity which leads to the phosphorylation of pop-1. This promotes pop-1 interaction with par-5 and translocation of pop-1 from the nucleus to the cytoplasm.

It is found in the cytoplasm. It localises to the cell cortex. The protein localises to the nucleus. In terms of biological role, antagonistic role in the Wnt signaling pathway that operates in embryogenesis. When located at the cortex it has been shown to inhibit Wnt signaling during asymmetric cell division but when relocated to the nucleus it shows positive regulation. Has a role in blastomere signaling during endoderm specification. Component of the beta-catenin-lit-1 complex which promotes phosphorylation, down-regulation and subcellular relocation of pop-1. Within the complex, activates lit-1-dependent kinase activity. Can substitute for bar-1 indicating functional redundancy. Appears to have a role in centrosome positioning and can activation transcription in yeast. Involved in the development of distal tip cells (DTC) by regulating the asymmetric distribution of cye-1 and cki-1 between the daughters of Z1.a and Z4.p cells. The polypeptide is Armadillo repeat-containing protein wrm-1 (Caenorhabditis elegans).